The sequence spans 225 residues: Heptaprenylglyceryl phosphate synthase (225 aa).

K6 provides a ligand contact to sn-glycerol 1-phosphate. Positions 8 and 34 each coordinate Mg(2+). Sn-glycerol 1-phosphate contacts are provided by residues 153 to 158 (YVEYSG), G183, and 203 to 204 (GN).

Belongs to the GGGP/HepGP synthase family. Group I subfamily. As to quaternary structure, homodimer. Mg(2+) serves as cofactor.

It carries out the reaction sn-glycerol 1-phosphate + all-trans-heptaprenyl diphosphate = 3-heptaprenyl-sn-glycero-1-phosphate + diphosphate. It participates in membrane lipid metabolism; glycerophospholipid metabolism. In terms of biological role, prenyltransferase that catalyzes in vivo the transfer of the heptaprenyl moiety of heptaprenyl pyrophosphate (HepPP; 35 carbon atoms) to the C3 hydroxyl of sn-glycerol-1-phosphate (G1P), producing heptaprenylglyceryl phosphate (HepGP). This reaction is an ether-bond-formation step in the biosynthesis of archaea-type G1P-based membrane lipids found in Bacillales. This is Heptaprenylglyceryl phosphate synthase from Listeria monocytogenes serotype 4b (strain CLIP80459).